Here is a 378-residue protein sequence, read N- to C-terminus: Ferredoxin--NADP reductase, root isozyme 1, chloroplastic (378 aa).

Residues 1-65 (MALSTTPSQM…KRSTICMSLQ (65 aa)) constitute a chloroplast transit peptide. The FAD-binding FR-type domain occupies 93–221 (KEPYTATIVS…TGPSGKVMLL (129 aa)). C196 and C201 are joined by a disulfide. S197 is modified (phosphoserine). T229 is modified (phosphothreonine). Position 231-249 (231-249 (IMIATGTGVAPYRGYLRRM)) interacts with NADP(+). Residues 349 to 373 (LKRVAEERGESWEQKLTQLRKNKQW) are a coiled coil.

The protein belongs to the ferredoxin--NADP reductase type 1 family. The cofactor is FAD. Expressed in shoots and roots. Less abundant in roots than RFNR2.

The protein resides in the plastid. It is found in the chloroplast. It catalyses the reaction 2 reduced [2Fe-2S]-[ferredoxin] + NADP(+) + H(+) = 2 oxidized [2Fe-2S]-[ferredoxin] + NADPH. In terms of biological role, maintains the supply of reduced ferredoxin under non-photosynthetic conditions. This Arabidopsis thaliana (Mouse-ear cress) protein is Ferredoxin--NADP reductase, root isozyme 1, chloroplastic (RFNR1).